Reading from the N-terminus, the 329-residue chain is Alpha/beta hydrolase domain-containing protein 17C (329 aa).

The span at 53-79 shows a compositional bias: low complexity; it reads GASAPAPAQATAAAAAAQPAPQQPEEG. A disordered region spans residues 53 to 85; it reads GASAPAPAQATAAAAAAQPAPQQPEEGAGAGPG. Residues serine 211, aspartate 276, and histidine 305 each act as charge relay system in the active site.

The protein belongs to the AB hydrolase superfamily. ABHD17 family. Post-translationally, palmitoylated on cysteine residues located in a cysteine cluster at the N-terminus which promotes membrane localization. Palmitoylation is required for post-synaptic localization and for depalmitoylating activity towards DLG4/PSD95.

It localises to the recycling endosome membrane. The protein resides in the cell projection. Its subcellular location is the dendritic spine. It is found in the postsynaptic density membrane. The enzyme catalyses S-hexadecanoyl-L-cysteinyl-[protein] + H2O = L-cysteinyl-[protein] + hexadecanoate + H(+). Inhibited by palmostatin-B. Its function is as follows. Hydrolyzes fatty acids from S-acylated cysteine residues in proteins. Has depalmitoylating activity towards NRAS and DLG4/PSD95. The polypeptide is Alpha/beta hydrolase domain-containing protein 17C (Homo sapiens (Human)).